Here is a 146-residue protein sequence, read N- to C-terminus: Flavodoxin (146 aa).

Residues 4–143 (ALIVYGSTTG…EVLDWAREVL (140 aa)) enclose the Flavodoxin-like domain.

This sequence belongs to the flavodoxin family. Requires FMN as cofactor.

In terms of biological role, electron-transfer proteins that function in various electron transport systems in microorganisms. Functionally interchangeable with ferredoxin. The polypeptide is Flavodoxin (Megalodesulfovibrio gigas (strain ATCC 19364 / DSM 1382 / NCIMB 9332 / VKM B-1759) (Desulfovibrio gigas)).